Consider the following 258-residue polypeptide: 14-3-3 protein homolog (258 aa).

The protein belongs to the 14-3-3 family.

The sequence is that of 14-3-3 protein homolog from Encephalitozoon cuniculi (strain GB-M1) (Microsporidian parasite).